Consider the following 265-residue polypeptide: NAD kinase 2 (265 aa).

Aspartate 51 (proton acceptor) is an active-site residue. NAD(+) is bound by residues 51-52 (DG), 122-123 (NE), arginine 149, aspartate 151, 162-167 (TAYNKS), and alanine 186.

It belongs to the NAD kinase family. A divalent metal cation serves as cofactor.

The protein resides in the cytoplasm. The catalysed reaction is NAD(+) + ATP = ADP + NADP(+) + H(+). Functionally, involved in the regulation of the intracellular balance of NAD and NADP, and is a key enzyme in the biosynthesis of NADP. Catalyzes specifically the phosphorylation on 2'-hydroxyl of the adenosine moiety of NAD to yield NADP. The sequence is that of NAD kinase 2 from Bacillus licheniformis (strain ATCC 14580 / DSM 13 / JCM 2505 / CCUG 7422 / NBRC 12200 / NCIMB 9375 / NCTC 10341 / NRRL NRS-1264 / Gibson 46).